The sequence spans 287 residues: Large ribosomal subunit protein uL2 (287 aa).

The tract at residues 221–287 (RGSVMNPCDH…SKRSRGGRDS (67 aa)) is disordered. Residues 258–287 (KTRKRNKPSNRFVLRKRRRVSKRSRGGRDS) are compositionally biased toward basic residues.

This sequence belongs to the universal ribosomal protein uL2 family. In terms of assembly, part of the 50S ribosomal subunit. Forms a bridge to the 30S subunit in the 70S ribosome.

One of the primary rRNA binding proteins. Required for association of the 30S and 50S subunits to form the 70S ribosome, for tRNA binding and peptide bond formation. It has been suggested to have peptidyltransferase activity; this is somewhat controversial. Makes several contacts with the 16S rRNA in the 70S ribosome. The chain is Large ribosomal subunit protein uL2 from Prochlorococcus marinus (strain SARG / CCMP1375 / SS120).